Reading from the N-terminus, the 124-residue chain is Superoxide reductase (124 aa).

Residues Glu-14, His-16, His-41, His-47, Cys-111, and His-114 each contribute to the Fe cation site.

Belongs to the desulfoferrodoxin family. In terms of assembly, homotetramer. The cofactor is Fe cation.

It carries out the reaction reduced [rubredoxin] + superoxide + 2 H(+) = oxidized [rubredoxin] + H2O2. In terms of biological role, uses electrons from reduced NADP, by way of rubredoxin and an oxidoreductase, to catalyze the reduction of superoxide to hydrogen peroxide. The chain is Superoxide reductase (sorA) from Pyrococcus furiosus (strain ATCC 43587 / DSM 3638 / JCM 8422 / Vc1).